Consider the following 356-residue polypeptide: Histidinol-phosphate aminotransferase (356 aa).

Position 208 is an N6-(pyridoxal phosphate)lysine (lysine 208).

The protein belongs to the class-II pyridoxal-phosphate-dependent aminotransferase family. Histidinol-phosphate aminotransferase subfamily. Homodimer. Pyridoxal 5'-phosphate is required as a cofactor.

The enzyme catalyses L-histidinol phosphate + 2-oxoglutarate = 3-(imidazol-4-yl)-2-oxopropyl phosphate + L-glutamate. It participates in amino-acid biosynthesis; L-histidine biosynthesis; L-histidine from 5-phospho-alpha-D-ribose 1-diphosphate: step 7/9. This is Histidinol-phosphate aminotransferase from Lactococcus lactis subsp. cremoris (strain MG1363).